The following is a 252-amino-acid chain: Serine/threonine phosphatase stp (252 aa).

Residues 1 to 18 (MHAEFRTDRGRIRHHNED) show a composition bias toward basic and acidic residues. The disordered stretch occupies residues 1-23 (MHAEFRTDRGRIRHHNEDNGGVF). Residues 2–242 (HAEFRTDRGR…DNITVLLVER (241 aa)) enclose the PPM-type phosphatase domain. Mn(2+) is bound by residues aspartate 36, glycine 37, aspartate 194, and aspartate 233.

Belongs to the PP2C family. Requires Mn(2+) as cofactor.

The protein resides in the cytoplasm. Its subcellular location is the membrane. It catalyses the reaction O-phospho-L-seryl-[protein] + H2O = L-seryl-[protein] + phosphate. It carries out the reaction O-phospho-L-threonyl-[protein] + H2O = L-threonyl-[protein] + phosphate. Its activity is regulated as follows. Activity not affected by inhibitors of phosphatases of the PPP family such as okadaic acid and cypermethrin, or by inhibitors of phosphatases of the PTP family such as sodium orthovanadate. Functionally, protein phosphatase that dephosphorylates EF-Tu. This is Serine/threonine phosphatase stp (stp) from Listeria monocytogenes serovar 1/2a (strain ATCC BAA-679 / EGD-e).